Reading from the N-terminus, the 200-residue chain is Charged multivesicular body protein 6-A (200 aa).

Gly2 is lipidated: N-myristoyl glycine. Residues 9 to 102 (RRSRVTEQDK…FAQIEMKVIE (94 aa)) are a coiled coil. The segment at 166–200 (EDLELPEAPSEPLPDTIPEKQAVKNKPKPQMIAAS) is disordered. The short motif at 168-179 (LELPEAPSEPLP) is the Type-2 MIT-interacting motif element.

This sequence belongs to the SNF7 family. In terms of assembly, probable core component of the endosomal sorting required for transport complex III (ESCRT-III). ESCRT-III components are thought to multimerize to form a flat lattice on the perimeter membrane of the endosome.

Its subcellular location is the endomembrane system. The protein resides in the late endosome membrane. Its function is as follows. Probable core component of the endosomal sorting required for transport complex III (ESCRT-III) which is involved in multivesicular bodies (MVBs) formation and sorting of endosomal cargo proteins into MVBs. MVBs contain intraluminal vesicles (ILVs) that are generated by invagination and scission from the limiting membrane of the endosome and mostly are delivered to lysosomes enabling degradation of membrane proteins, such as stimulated growth factor receptors, lysosomal enzymes and lipids. In the ESCRT-III complex, it probably serves as an acceptor for the ESCRT-II complex on endosomal membranes. The chain is Charged multivesicular body protein 6-A (chmp6-a) from Xenopus laevis (African clawed frog).